Reading from the N-terminus, the 568-residue chain is Autophagy-related protein 18 (568 aa).

A WD 1 repeat occupies 19–57; that stretch reads KPSSSVNFITFNQDGSCIAVGNNKGYSIFTTNPFTKCYD. Polar residues predominate over residues 162–171; it reads STDTSNSADN. A disordered region spans residues 162–210; sequence STDTSNSADNSGSIGSGPASGSGAGSGSASMTSTDSTPDAQSHSYLAYP. Residues 175–187 show a composition bias toward gly residues; sequence IGSGPASGSGAGS. Low complexity predominate over residues 188–198; that stretch reads GSASMTSTDST. WD repeat units lie at residues 268–308 and 313–352; these read AHKS…KLYQ and TYPTKVYSVAFSPDNRYVVTTSASGTVHIFRLGEDESLES. A L/FRRG motif motif is present at residues 309 to 313; sequence FRRGT. Positions 350 to 429 are disordered; that stretch reads LESKHKRKRA…ISGMSEDGKE (80 aa). Positions 375-394 are enriched in acidic residues; that stretch reads DLDDEIEDDGDDSDVDDVES. Residues 405 to 421 are compositionally biased toward polar residues; that stretch reads LSQGSSNSYTSMNSGIS. WD repeat units follow at residues 464–508 and 518–558; these read DFLP…DMVP and APAS…GGDC.

This sequence belongs to the WD repeat PROPPIN family. Component of the PI(3,5)P2 regulatory complex.

It is found in the preautophagosomal structure membrane. The protein localises to the vacuole membrane. It localises to the endosome membrane. Its function is as follows. The PI(3,5)P2 regulatory complex regulates both the synthesis and turnover of phosphatidylinositol 3,5-bisphosphate (PtdIns(3,5)P2). Necessary for proper vacuole morphology. Plays an important role in osmotically-induced vacuole fragmentation. Required for cytoplasm to vacuole transport (Cvt) vesicle formation, pexophagy and starvation-induced autophagy. Involved in correct ATG9 trafficking to the pre-autophagosomal structure. Might also be involved in premeiotic DNA replication. The chain is Autophagy-related protein 18 (ATG18) from Meyerozyma guilliermondii (strain ATCC 6260 / CBS 566 / DSM 6381 / JCM 1539 / NBRC 10279 / NRRL Y-324) (Yeast).